Consider the following 449-residue polypeptide: Probable glycine dehydrogenase (decarboxylating) subunit 1 (449 aa).

The protein belongs to the GcvP family. N-terminal subunit subfamily. As to quaternary structure, the glycine cleavage system is composed of four proteins: P, T, L and H. In this organism, the P 'protein' is a heterodimer of two subunits.

The catalysed reaction is N(6)-[(R)-lipoyl]-L-lysyl-[glycine-cleavage complex H protein] + glycine + H(+) = N(6)-[(R)-S(8)-aminomethyldihydrolipoyl]-L-lysyl-[glycine-cleavage complex H protein] + CO2. The glycine cleavage system catalyzes the degradation of glycine. The P protein binds the alpha-amino group of glycine through its pyridoxal phosphate cofactor; CO(2) is released and the remaining methylamine moiety is then transferred to the lipoamide cofactor of the H protein. In Pyrococcus abyssi (strain GE5 / Orsay), this protein is Probable glycine dehydrogenase (decarboxylating) subunit 1.